A 174-amino-acid polypeptide reads, in one-letter code: Secreted protein A (174 aa).

The N-terminal stretch at 1 to 19 is a signal peptide; it reads MRLLITLFAIFALFNCSLA. Residue Asn-156 is glycosylated (N-linked (GlcNAc...) asparagine).

Belongs to the Sct family. In terms of processing, probably contains disulfide bonds.

It localises to the secreted. The protein localises to the extracellular vesicle. This is Secreted protein A (p17) from Dictyostelium discoideum (Social amoeba).